The primary structure comprises 760 residues: Prolyl endopeptidase (760 aa).

Active-site charge relay system residues include Ser609, Asp693, and His730.

It belongs to the peptidase S9A family.

It localises to the cytoplasm. It carries out the reaction Hydrolysis of Pro-|-Xaa &gt;&gt; Ala-|-Xaa in oligopeptides.. Its activity is regulated as follows. Inhibited by chymostatin, Boc-Glu(NHO-Bz)-Pyrrolidide, Z-Pro-L-prolinal dimethyacetal and the peptide H-H-L-P-P-P-V-OH. In terms of biological role, cleaves peptide bonds on the C-terminal side of prolyl residues within peptides that are up to approximately 30 amino acids long. This Dictyostelium discoideum (Social amoeba) protein is Prolyl endopeptidase (prep).